Reading from the N-terminus, the 281-residue chain is F-actin-capping protein subunit alpha (281 aa).

Belongs to the F-actin-capping protein alpha subunit family. In terms of assembly, component of the F-actin capping complex, composed of a heterodimer of an alpha and a beta subunit.

It localises to the cytoplasm. Its subcellular location is the cytoskeleton. Functionally, F-actin-capping proteins bind in a Ca(2+)-independent manner to the fast growing ends of actin filaments (barbed end) thereby blocking the exchange of subunits at these ends. Unlike other capping proteins (such as gelsolin and severin), these proteins do not sever actin filaments. The protein is F-actin-capping protein subunit alpha (acpB) of Dictyostelium discoideum (Social amoeba).